The primary structure comprises 289 residues: MSAKILDGKALAGRLQAEMAAQVQAWLPRVGRPPGLAVLRVGEDPASAAYVRGKERACERVGIASFGRHFSAQDSPAHLLDAIAQLNQDERVDGILVQLPLPPGWDPIPPLLAIDPAKDVDGLHPLNLGRLVRGEPGLRSCTPLGVMRLLQAEGIPIAGRKAVVVGRSLLVGKPLSLMLLAADATVTVAHSRTPNLAEVTRSADIVVMAVGRPRLLTADMVKPGAVVVDVGINRIQDPDGSEQLVGDVDYEAVKERAAAITPVPGGVGPMTVTMLLANTLESYKLRSHL.

Residues Gly166–Ser168, Ser191, and Ile232 each bind NADP(+).

The protein belongs to the tetrahydrofolate dehydrogenase/cyclohydrolase family. Homodimer.

It carries out the reaction (6R)-5,10-methylene-5,6,7,8-tetrahydrofolate + NADP(+) = (6R)-5,10-methenyltetrahydrofolate + NADPH. The enzyme catalyses (6R)-5,10-methenyltetrahydrofolate + H2O = (6R)-10-formyltetrahydrofolate + H(+). Its pathway is one-carbon metabolism; tetrahydrofolate interconversion. Catalyzes the oxidation of 5,10-methylenetetrahydrofolate to 5,10-methenyltetrahydrofolate and then the hydrolysis of 5,10-methenyltetrahydrofolate to 10-formyltetrahydrofolate. The chain is Bifunctional protein FolD from Synechococcus sp. (strain JA-3-3Ab) (Cyanobacteria bacterium Yellowstone A-Prime).